A 690-amino-acid polypeptide reads, in one-letter code: Eukaryotic translation initiation factor 3 subunit B (690 aa).

Positions 1–11 (MAKKKSEEHSG) are enriched in basic and acidic residues. Positions 1-36 (MAKKKSEEHSGADANDSDYQEEPNFEDPPGFVDNIS) are disordered. Residues 15-25 (NDSDYQEEPNF) are compositionally biased toward acidic residues. The RRM domain maps to 57–141 (SVVVVDNIPK…HTFAVNLFTD (85 aa)). WD repeat units lie at residues 207 to 246 (TRER…KIQK), 293 to 331 (DGMS…LLDL), 334 to 369 (IKIP…TLME), 442 to 484 (EIRE…KPSL), and 530 to 575 (PDHF…IKRT). Residues 595–645 (EEKQKEIKKNLKKYYAAFEQKDRLRLTRASKELLEKRSQLRETFMEYRNKR) adopt a coiled-coil conformation.

The protein belongs to the eIF-3 subunit B family. As to quaternary structure, component of the eukaryotic translation initiation factor 3 (eIF-3) complex. The eIF-3 complex interacts with pix. Interacts with mxt.

It is found in the cytoplasm. In terms of biological role, RNA-binding component of the eukaryotic translation initiation factor 3 (eIF-3) complex, which is involved in protein synthesis of a specialized repertoire of mRNAs and, together with other initiation factors, stimulates binding of mRNA and methionyl-tRNAi to the 40S ribosome. The eIF-3 complex specifically targets and initiates translation of a subset of mRNAs involved in cell proliferation. This is Eukaryotic translation initiation factor 3 subunit B from Drosophila yakuba (Fruit fly).